The chain runs to 173 residues: Large ribosomal RNA subunit accumulation protein YceD (173 aa).

It belongs to the DUF177 domain family.

Functionally, plays a role in synthesis, processing and/or stability of 23S rRNA. The chain is Large ribosomal RNA subunit accumulation protein YceD (yceD) from Salmonella typhi.